A 256-amino-acid chain; its full sequence is Cysteine-rich repeat secretory protein 42 (256 aa).

An N-terminal signal peptide occupies residues 1 to 26 (MSSVFGSVHILAMIAIQLLLTHSVSS). Gnk2-homologous domains follow at residues 33–136 (YLHH…SVAS) and 142–253 (YEND…LYPF).

This sequence belongs to the cysteine-rich repeat secretory protein family.

The protein resides in the secreted. The chain is Cysteine-rich repeat secretory protein 42 (CRRSP42) from Arabidopsis thaliana (Mouse-ear cress).